The chain runs to 85 residues: WAP four-disulfide core domain protein 12 (85 aa).

Positions 1–21 (MWPNSILVLMTLLISSTLVTG) are cleaved as a signal peptide. The 48-residue stretch at 25–72 (KGEEKRVCPPDYVRCIRQDDPQCYSDNDCGDQEICCFWQCGFKCVLPV) folds into the WAP domain. Intrachain disulfides connect Cys32–Cys60, Cys39–Cys64, Cys47–Cys59, and Cys53–Cys68.

Constitutively expressed in tongue.

The protein resides in the secreted. In terms of biological role, antibacterial protein which inhibits the growth of E.coli and S.aureus. Putative acid-stable proteinase inhibitor. This Mus musculus (Mouse) protein is WAP four-disulfide core domain protein 12.